A 529-amino-acid polypeptide reads, in one-letter code: ADP,ATP carrier protein 1 (529 aa).

Helical transmembrane passes span 24 to 44, 63 to 83, 93 to 113, 124 to 144, 149 to 169, 184 to 204, 220 to 240, 284 to 304, 322 to 342, 356 to 376, 381 to 401, and 463 to 483; these read LKKVLPMFLMFFCISFNYTIL, IPFIKLWLVVPSAVVFMLIYA, ALFYAVLSPFVVFFALFPLVI, DFADTLQAILPSGFLGFIAML, FAAFYVLSELWGSVMLSLMFW, FYALFGVGANVALLISGPAIV, WGVTLYFLMAMFLCSCAIIAA, YMLLLALLVICYGVCINLVEV, AFMGTFSFWTGVVSVFVMLFI, ALVTPVMVLVTGAIFFALVIF, TGLVAALGTTPLMLAVVVGAV, and ISAMTPFLAVALFAIIMVWLT. Low complexity predominate over residues 509-520; that stretch reads AAEKEASPAAKE. The tract at residues 509 to 529 is disordered; it reads AAEKEASPAAKEVSPAIEGVS.

It belongs to the ADP/ATP translocase tlc family.

It localises to the cell membrane. The chain is ADP,ATP carrier protein 1 (tlcA) from Chlamydia muridarum (strain MoPn / Nigg).